The sequence spans 312 residues: Malate dehydrogenase (312 aa).

Residues 7 to 13 and Asp34 each bind NAD(+); that span reads GAAGGIG. Substrate contacts are provided by Arg81 and Arg87. Residues Asn94 and 117–119 contribute to the NAD(+) site; that span reads ITN. Asn119 and Arg153 together coordinate substrate. His177 functions as the Proton acceptor in the catalytic mechanism. Met227 lines the NAD(+) pocket.

It belongs to the LDH/MDH superfamily. MDH type 1 family. As to quaternary structure, homodimer.

The catalysed reaction is (S)-malate + NAD(+) = oxaloacetate + NADH + H(+). Functionally, catalyzes the reversible oxidation of malate to oxaloacetate. The polypeptide is Malate dehydrogenase (Yersinia pseudotuberculosis serotype O:1b (strain IP 31758)).